Reading from the N-terminus, the 636-residue chain is DNA ligase (636 aa).

Lys-113 serves as the catalytic N6-AMP-lysine intermediate. In terms of domain architecture, BRCT spans Asn-560 to Lys-636.

Belongs to the NAD-dependent DNA ligase family.

It catalyses the reaction NAD(+) + (deoxyribonucleotide)n-3'-hydroxyl + 5'-phospho-(deoxyribonucleotide)m = (deoxyribonucleotide)n+m + AMP + beta-nicotinamide D-nucleotide.. Catalyzes the formation of phosphodiester linkages between 5'-phosphoryl and 3'-hydroxyl groups in double-stranded DNA using NAD as a coenzyme and as the energy source for the reaction. This is DNA ligase from Acanthamoeba polyphaga (Amoeba).